Reading from the N-terminus, the 347-residue chain is Protein RecA (347 aa).

66 to 73 contributes to the ATP binding site; that stretch reads GPESSGKT.

This sequence belongs to the RecA family.

Its subcellular location is the cytoplasm. In terms of biological role, can catalyze the hydrolysis of ATP in the presence of single-stranded DNA, the ATP-dependent uptake of single-stranded DNA by duplex DNA, and the ATP-dependent hybridization of homologous single-stranded DNAs. It interacts with LexA causing its activation and leading to its autocatalytic cleavage. This Methylococcus capsulatus (strain ATCC 33009 / NCIMB 11132 / Bath) protein is Protein RecA.